A 241-amino-acid chain; its full sequence is Uridylate kinase (241 aa).

An ATP-binding site is contributed by 9 to 10 (GS). Gly-44 is a binding site for UMP. Residues Gly-45 and Arg-49 each contribute to the ATP site. Residues Asp-66 and 114-120 (VVAGQTT) contribute to the UMP site. ATP-binding residues include Thr-140, Phe-146, and Asp-149.

This sequence belongs to the UMP kinase family. In terms of assembly, homohexamer.

It localises to the cytoplasm. It carries out the reaction UMP + ATP = UDP + ADP. The protein operates within pyrimidine metabolism; CTP biosynthesis via de novo pathway; UDP from UMP (UMPK route): step 1/1. Its activity is regulated as follows. Inhibited by UTP. In terms of biological role, catalyzes the reversible phosphorylation of UMP to UDP. The protein is Uridylate kinase of Halobacterium salinarum (strain ATCC 29341 / DSM 671 / R1).